Reading from the N-terminus, the 89-residue chain is uncharacterized protein (89 aa).

Residues 66–89 (RIKEQSSSSSATRTTQEPSLHLPD) are disordered.

This is an uncharacterized protein from Cestrum parqui (CmYLCV).